The following is a 396-amino-acid chain: Elongation factor Tu 1 (396 aa).

Residues 10–206 (KPHVNIGTIG…AVDEYIPTPE (197 aa)) enclose the tr-type G domain. Positions 19 to 26 (GHVDHGKT) are G1. 19–26 (GHVDHGKT) is a GTP binding site. Position 26 (T26) interacts with Mg(2+). The tract at residues 60–64 (GITIN) is G2. A G3 region spans residues 81–84 (DCPG). Residues 81 to 85 (DCPGH) and 136 to 139 (NKVD) each bind GTP. The interval 136–139 (NKVD) is G4. The G5 stretch occupies residues 174–176 (SAL).

It belongs to the TRAFAC class translation factor GTPase superfamily. Classic translation factor GTPase family. EF-Tu/EF-1A subfamily. Monomer.

The protein localises to the cytoplasm. The enzyme catalyses GTP + H2O = GDP + phosphate + H(+). Functionally, GTP hydrolase that promotes the GTP-dependent binding of aminoacyl-tRNA to the A-site of ribosomes during protein biosynthesis. This chain is Elongation factor Tu 1, found in Hyphomonas neptunium (strain ATCC 15444).